A 281-amino-acid polypeptide reads, in one-letter code: uncharacterized protein (281 aa).

This is an uncharacterized protein from Haloarcula marismortui (strain ATCC 43049 / DSM 3752 / JCM 8966 / VKM B-1809) (Halobacterium marismortui).